The primary structure comprises 248 residues: tRNA pseudouridine synthase A (248 aa).

Residue Asp-54 is the Nucleophile of the active site. Substrate is bound at residue Tyr-112.

It belongs to the tRNA pseudouridine synthase TruA family. Homodimer.

It carries out the reaction uridine(38/39/40) in tRNA = pseudouridine(38/39/40) in tRNA. Formation of pseudouridine at positions 38, 39 and 40 in the anticodon stem and loop of transfer RNAs. The chain is tRNA pseudouridine synthase A from Geobacillus sp. (strain WCH70).